We begin with the raw amino-acid sequence, 153 residues long: MGKISSLPTQLFKCCFCDFLKVKMHIMSSSHLFYLALCLLTFTSSATAGPETLCGAELVDALQFVCGDRGFYFNKPTGYGSSSRRAPQTGIVDECCFRSCDLRRLEMYCAPLKPAKSARSVRAQRHTDMPKAQKEVHLKNASRGSAGNKNYRM.

The tract at residues 49 to 77 is b; it reads GPETLCGAELVDALQFVCGDRGFYFNKPT. 3 disulfide bridges follow: cysteine 54/cysteine 96, cysteine 66/cysteine 109, and cysteine 95/cysteine 100. Residues 78–89 are c; that stretch reads GYGSSSRRAPQT. An a region spans residues 90–110; sequence GIVDECCFRSCDLRRLEMYCA. Positions 111–118 are d; sequence PLKPAKSA. A propeptide spans 119–153 (e peptide); that stretch reads RSVRAQRHTDMPKAQKEVHLKNASRGSAGNKNYRM. Residues 120–153 form a disordered region; that stretch reads SVRAQRHTDMPKAQKEVHLKNASRGSAGNKNYRM. Residues 125–138 show a composition bias toward basic and acidic residues; the sequence is RHTDMPKAQKEVHL. Residues 142–153 are compositionally biased toward polar residues; the sequence is SRGSAGNKNYRM.

This sequence belongs to the insulin family. In terms of assembly, forms a ternary complex with IGFR1 and ITGAV:ITGB3. Forms a ternary complex with IGFR1 and ITGA6:ITGB4. Forms a ternary complex with IGFBP3 and ALS.

It localises to the secreted. In terms of biological role, the insulin-like growth factors, isolated from plasma, are structurally and functionally related to insulin but have a much higher growth-promoting activity. May be a physiological regulator of [1-14C]-2-deoxy-D-glucose (2DG) transport and glycogen synthesis in osteoblasts. Stimulates glucose transport in bone-derived osteoblastic (PyMS) cells and is effective at much lower concentrations than insulin, not only regarding glycogen and DNA synthesis but also with regard to enhancing glucose uptake. May play a role in synapse maturation. Ca(2+)-dependent exocytosis of IGF1 is required for sensory perception of smell in the olfactory bulb. Acts as a ligand for IGF1R. Binds to the alpha subunit of IGF1R, leading to the activation of the intrinsic tyrosine kinase activity which autophosphorylates tyrosine residues in the beta subunit thus initiating a cascade of down-stream signaling events leading to activation of the PI3K-AKT/PKB and the Ras-MAPK pathways. Binds to integrins ITGAV:ITGB3 and ITGA6:ITGB4. Its binding to integrins and subsequent ternary complex formation with integrins and IGFR1 are essential for IGF1 signaling. Induces the phosphorylation and activation of IGFR1, MAPK3/ERK1, MAPK1/ERK2 and AKT1. As part of the MAPK/ERK signaling pathway, acts as a negative regulator of apoptosis in cardiomyocytes via promotion of STUB1/CHIP-mediated ubiquitination and degradation of ICER-type isoforms of CREM. The sequence is that of Insulin-like growth factor 1 from Ailuropoda melanoleuca (Giant panda).